Here is a 111-residue protein sequence, read N- to C-terminus: Movement protein TGB2 (111 aa).

Over 1–16 the chain is Cytoplasmic; sequence MSSHQNFLTPPPDHSK. A helical membrane pass occupies residues 17–37; that stretch reads AILAVAVGVGLAIVLHFSLSY. Residues 38 to 72 lie on the Lumenal side of the membrane; that stretch reads KLPSPGDNIHSLPFGGTYRDGTKSIIYNSPHRGPG. The chain crosses the membrane as a helical span at residues 73–93; sequence QSGALPIITVFAIIECTLHVL. The Cytoplasmic segment spans residues 94–111; the sequence is RKRDNPVRPQHSDCPNCS.

Belongs to the Tymovirales TGBp2 protein family.

Its subcellular location is the host endoplasmic reticulum membrane. Its function is as follows. Plays a role in viral cell-to-cell propagation, by facilitating genome transport to neighboring plant cells through plasmosdesmata,. The protein is Movement protein TGB2 of Carica papaya (Papaya).